Here is a 350-residue protein sequence, read N- to C-terminus: MSESLNYYVTAYYRFTKLADLPAIQKALEDKAEELNVKGLVILGDEGYNSTCAASSIESFEAWKTFIREYFNSPDQFFKDSESTKSPFRRFKVKVRNEIVTTGIPGVMPPEGVNHHLSPTEWNKVMKEETDYVMIDTRNWYEYKIGTFKGALNPNIEKFTEFPQYIEAQGIPKDKKMLIFCTGGIRCEKGILELQDKGYNNVFQLDGGILNYMKEYPNDQFEGECFVFDHRVAVDQNLQPTTKFGLCPHCGQPSTIKIECKRCDAHELICEDCIKVEYAKDTCSKNCAYQLEKHPARKGQKQLVPFEIEKMKAEGKDTGSIPQIRVTRTKYISLNKNGEAETRSTKETAE.

A Rhodanese domain is found at 128 to 221 (EETDYVMIDT…YMKEYPNDQF (94 aa)). The active-site Cysteine persulfide intermediate is cysteine 181.

This sequence belongs to the TrhO family.

The catalysed reaction is uridine(34) in tRNA + AH2 + O2 = 5-hydroxyuridine(34) in tRNA + A + H2O. Functionally, catalyzes oxygen-dependent 5-hydroxyuridine (ho5U) modification at position 34 in tRNAs. The polypeptide is tRNA uridine(34) hydroxylase (Bdellovibrio bacteriovorus (strain ATCC 15356 / DSM 50701 / NCIMB 9529 / HD100)).